Consider the following 151-residue polypeptide: Small ribosomal subunit protein uS13 (151 aa).

The protein belongs to the universal ribosomal protein uS13 family. In terms of assembly, part of the 30S ribosomal subunit. Forms a loose heterodimer with protein S19. Forms two bridges to the 50S subunit in the 70S ribosome.

Functionally, located at the top of the head of the 30S subunit, it contacts several helices of the 16S rRNA. In the 70S ribosome it contacts the 23S rRNA (bridge B1a) and protein L5 of the 50S subunit (bridge B1b), connecting the 2 subunits; these bridges are implicated in subunit movement. This Methanospirillum hungatei JF-1 (strain ATCC 27890 / DSM 864 / NBRC 100397 / JF-1) protein is Small ribosomal subunit protein uS13.